Consider the following 631-residue polypeptide: Protein FRIABLE 1 (631 aa).

Over residues 1–13 the composition is skewed to low complexity; it reads MSVGVPVNPSSSS. The segment at 1–36 is disordered; that stretch reads MSVGVPVNPSSSSQLPAAPTTTTRRRVADSQEDHSH. At 1 to 120 the chain is on the cytoplasmic side; it reads MSVGVPVNPS…NMRSTTNLGR (120 aa). The segment covering 26–36 has biased composition (basic and acidic residues); it reads RVADSQEDHSH. The helical; Signal-anchor for type II membrane protein transmembrane segment at 121 to 141 threads the bilayer; sequence FILTLLSILVVTFFLIVALSG. Topologically, residues 142–631 are lumenal; it reads GVGRRRKHVE…RPSLRAQSLR (490 aa). N-linked (GlcNAc...) asparagine glycosylation is found at Asn-246, Asn-329, and Asn-364. 384–386 provides a ligand contact to substrate; it reads HLR. N-linked (GlcNAc...) asparagine glycosylation is found at Asn-398 and Asn-425.

The protein belongs to the glycosyltransferase GT106 family. Ubiquitous. Strong expression in young seedlings, particularly at the junction between hypocotyl and root, in emerging cotyledons, and in parts of the roots. Also detected in the inflorescence (sepals, petals, mature pollen and siliques) and rosette leaves.

Its subcellular location is the golgi apparatus membrane. It functions in the pathway glycan metabolism. Glycosyltransferase required for normal cell adhesion and cell wall integrity. The chain is Protein FRIABLE 1 from Arabidopsis thaliana (Mouse-ear cress).